A 111-amino-acid chain; its full sequence is C-type lectin lectoxin-Enh2 (111 aa).

Positions 1–23 are cleaved as a signal peptide; sequence MGQFTVVSLGLLAMFLSLSGAKG. A disulfide bond links Cys26 and Cys37. Residues 33-108 form the C-type lectin domain; the sequence is RNGVCNKLFP…CASLHPFICQ (76 aa). The Mannose-binding motif lies at 72-74; sequence EPN. Residues Glu80, Asn95, and Asp96 each contribute to the Ca(2+) site. A disulfide bridge connects residues Cys82 and Cys99.

It belongs to the true venom lectin family. As to expression, expressed by the venom gland.

The protein resides in the secreted. In terms of biological role, mannose-binding lectin which recognizes specific carbohydrate structures and agglutinates a variety of animal cells by binding to cell-surface glycoproteins and glycolipids. May be a calcium-dependent lectin. This is C-type lectin lectoxin-Enh2 from Pseudoferania polylepis (Macleay's water snake).